A 497-amino-acid chain; its full sequence is Serine/threonine protein phosphatase 2A 57 kDa regulatory subunit B' epsilon isoform (497 aa).

The segment at 12 to 71 is disordered; that stretch reads KFNKSDQHHQDNNNNNNNTSTNTVVRGSRTTTPAPSSVSNGESQTTAQSPSQTPNHPMFT. The span at 23–34 shows a compositional bias: low complexity; it reads NNNNNNNTSTNT. Positions 35–71 are enriched in polar residues; that stretch reads VVRGSRTTTPAPSSVSNGESQTTAQSPSQTPNHPMFT.

The protein belongs to the phosphatase 2A regulatory subunit B56 family. In terms of assembly, PP2A consists of a common heteromeric enzyme, composed of a catalytic subunit (subunits C), a constant regulatory subunit (subunit A), and a variety of regulatory subunits such as subunits B (the R2/B/PR55/B55, R3/B''/PR72/PR130/PR59 and R5/B'/B56 families). In terms of tissue distribution, expressed ubiquitously.

Its subcellular location is the cytoplasm. Functionally, the B regulatory subunit may modulate substrate selectivity and catalytic activity, and may also direct the localization of the catalytic enzyme to a particular subcellular compartment. The sequence is that of Serine/threonine protein phosphatase 2A 57 kDa regulatory subunit B' epsilon isoform (B'EPSILON) from Arabidopsis thaliana (Mouse-ear cress).